We begin with the raw amino-acid sequence, 307 residues long: Zinc-alpha-2-glycoprotein (307 aa).

The first 17 residues, 1 to 17 (MVPVLLSLPLLLGPAVF), serve as a signal peptide directing secretion. Residue glutamine 18 is modified to Pyrrolidone carboxylic acid. A disulfide bridge links cysteine 118 with cysteine 181. Asparagine 123, asparagine 190, and asparagine 254 each carry an N-linked (GlcNAc...) asparagine glycan. An Ig-like C1-type domain is found at 202-287 (PTVTITSRVI…DHRGFSQSLS (86 aa)). Cysteines 220 and 275 form a disulfide.

Belongs to the MHC class I family. As to quaternary structure, interacts with PIP.

It is found in the secreted. In terms of biological role, stimulates lipid degradation in adipocytes and causes the extensive fat losses associated with some advanced cancers. The protein is Zinc-alpha-2-glycoprotein (Azgp1) of Mus musculus (Mouse).